The sequence spans 83 residues: Small ribosomal subunit protein bS16 (83 aa).

The protein belongs to the bacterial ribosomal protein bS16 family.

This is Small ribosomal subunit protein bS16 from Finegoldia magna (strain ATCC 29328 / DSM 20472 / WAL 2508) (Peptostreptococcus magnus).